A 1843-amino-acid polypeptide reads, in one-letter code: GTPase-activating protein CdGAPr (1843 aa).

A disordered region spans residues 94 to 117; the sequence is ASTESSCSPPIQGAVPPPKPSRHM. Ser-166, Ser-168, and Ser-180 each carry phosphoserine. An SH3 domain is found at 295-363; that stretch reads PAVGAAYGVR…PQSCVATIGD (69 aa). The Rho-GAP domain occupies 424–618; it reads CDLSEHLLNS…YLIRNCHNIF (195 aa). The disordered stretch occupies residues 746 to 780; it reads PRSWQKRKPDKTPSWKSIFSRSQRQGNPDPGQKIT. Polar residues predominate over residues 759 to 771; the sequence is SWKSIFSRSQRQG. A phosphoserine mark is found at Ser-837 and Ser-840. Residue Thr-843 is modified to Phosphothreonine. Residues Ser-851, Ser-861, Ser-872, and Ser-876 each carry the phosphoserine modification. Disordered stretches follow at residues 894 to 975 and 1013 to 1106; these read ESES…GHES and ASVE…RVEP. A compositionally biased stretch (polar residues) spans 928 to 939; sequence FSSQTNSVNPSP. Ser-1029 carries the post-translational modification Phosphoserine. Residues 1029–1053 are compositionally biased toward low complexity; the sequence is SPISSSNGASVGSSSSSTRYSYPSV. The span at 1058-1069 shows a compositional bias: basic and acidic residues; sequence KRKEQQDAKERF. Over residues 1071–1097 the composition is skewed to polar residues; that stretch reads YQGTFTQPGQKQESSAPRPVHSTNNGA. Thr-1118 and Thr-1121 each carry phosphothreonine. Residues Ser-1125, Ser-1216, Ser-1281, and Ser-1284 each carry the phosphoserine modification. The stretch at 1378–1404 forms a coiled coil; the sequence is YKAAEMTQQLLQLEQEHHDHEEQQEKE. A phosphoserine mark is found at Ser-1453 and Ser-1456. Thr-1679 bears the Phosphothreonine mark. 2 disordered regions span residues 1721-1745 and 1779-1829; these read TGGG…LGQQ and TAQK…QFSI. Residues 1779–1790 show a composition bias toward polar residues; sequence TAQKYGSTSKTP. The segment covering 1793–1806 has biased composition (basic and acidic residues); it reads KFERSQPMPRDRLQ. Positions 1807–1818 are enriched in polar residues; that stretch reads RNSLAESNAGTN.

In terms of tissue distribution, ubiquitously expressed.

Its function is as follows. Probably functions as a GTPase-activating protein (GAP) for RAC1 and/or CDC42. Required for optic stalk formation. In Drosophila melanogaster (Fruit fly), this protein is GTPase-activating protein CdGAPr (CdGAPr).